A 149-amino-acid chain; its full sequence is Thioredoxin-like protein 4B (149 aa).

Belongs to the DIM1 family. As to quaternary structure, homodimer. Interacts with the U5-102 kDa protein subunit of the spliceosome.

The protein resides in the nucleus. Essential role in pre-mRNA splicing. Required in cell cycle progression for S/G(2) transition. The sequence is that of Thioredoxin-like protein 4B (Txnl4b) from Mus musculus (Mouse).